A 490-amino-acid chain; its full sequence is 5'-3' exonuclease PLD3 (490 aa).

Over 1-38 (MKPKLMYQELKVPAEEPANELPMNEIEAWKAAEKKARW) the chain is Cytoplasmic. Residues 39 to 59 (VLLVLILAVVGFGALMTQLFL) traverse the membrane as a helical; Signal-anchor for type II membrane protein segment. Over 60 to 490 (WEYGDLHLFG…DSVGNACRLL (431 aa)) the chain is Lumenal. Intrachain disulfides connect Cys-77–Cys-239 and Cys-81–Cys-237. Asn-97 and Asn-132 each carry an N-linked (GlcNAc...) asparagine glycan. Residues 196–223 (THGVLHTKFWVVDQTHFYLGSANMDWRS) form the PLD phosphodiesterase 1 domain. Catalysis depends on residues His-201, Lys-203, and Asp-208. The Proton donor role is filled by His-201. Phosphate-binding residues include His-201 and Lys-203. Asn-218 serves as a coordination point for phosphate. N-linked (GlcNAc...) asparagine glycosylation is found at Asn-236, Asn-284, and Asn-387. Cys-366 and Cys-487 are disulfide-bonded. The region spanning 411–437 (YARVNHNKYMVTERATYIGTSNWSGNY) is the PLD phosphodiesterase 2 domain. His-416 contacts phosphate. Residue His-416 is the Nucleophile of the active site. Phe-438 contacts Mg(2+).

Belongs to the phospholipase D family. As to quaternary structure, homodimer. Interacts with APP. Post-translationally, N-glycosylated. In terms of processing, proteolytically processed to a soluble active form that is stable within endosomes and lysosomes. During transport through the secretory pathway becomes proteolysed by cysteine proteases, thereby releasing a stable soluble lysosomal lumenal polypeptide, whereas the transmembrane-bound fragment is rapidly degraded. Its transport route to lysosomes involves ubiquitination and the ESCRT complex. Ubiquitinated at N-terminus. Ubiquitination mediates sorting into lysosomes. In terms of tissue distribution, widely expressed. In the brain, high levels of expression are detected in the frontal, temporal and occipital cortices and hippocampus. Expressed at low level in corpus callosum. Expressed in plasmacytoid dendritic cells and monocytes (at protein level).

The protein resides in the endoplasmic reticulum membrane. Its subcellular location is the lysosome lumen. It localises to the early endosome membrane. It is found in the late endosome membrane. The protein localises to the golgi apparatus membrane. The protein resides in the endosome membrane. It carries out the reaction Exonucleolytic cleavage in the 5'- to 3'-direction to yield nucleoside 3'-phosphates.. It catalyses the reaction a 5'-end 5'-dephospho-ribonucleotidyl-ribonucleotide-RNA + H2O = a ribonucleoside 3'-phosphate + a 5'-end dephospho-ribonucleoside-RNA + H(+). The enzyme catalyses a ribonucleoside 3'-phosphate-2'-3'-cyclophospho-GMP + H2O = a ribonucleoside 3'-phosphate + 2',3'-cyclophospho-GMP + H(+). The catalysed reaction is a 5'-end 5'-dephospho-2'-deoxyribonucleotidyl-2'-deoxyribonucleotide in single-stranded DNA + H2O = a 5'-end dephospho-2'-deoxyribonucleoside in single-stranded DNA + a 2'-deoxyribonucleoside 3'-phosphate + H(+). It carries out the reaction a 5'-end 5'-phospho-2'-deoxyribonucleotide in single-stranded DNA + H2O = a 5'-end 5'-dephospho-2'-deoxyribonucleotide in single-stranded DNA + phosphate. It catalyses the reaction a 3-lyso-sn-glycero-1-phospho-(3'-acyl-1'-sn-glycerol) + a 1-acyl-sn-glycerol = a 3-acyl-sn-glycero-1-phospho-(3'-acyl-1'-sn-glycerol) + glycerol. The enzyme catalyses 3-lyso-sn-glycero-1-phospho-(3'-(9Z-octadecenoyl)-1'-sn-glycerol) + 1-(9Z-octadecenoyl)-sn-glycerol = 3-(9Z-octadecenoyl)-sn-glycero-1-phospho-(3'-(9Z-octadecenoyl)-1'-sn-glycerol) + glycerol. The exonuclease activity toward ssDNA substrate is Ca(2+) and Mg(2+)-independent, but it is inhibited by Fe(2+), Cu(2+) and to a lesser extent Zn(2+) ions. Functionally, 5'-&gt;3' exonuclease that hydrolyzes the phosphodiester bond of single-stranded DNA (ssDNA) and RNA molecules to form nucleoside 3'-monophosphates and 5'-end 5'-hydroxy deoxyribonucleotide/ribonucleotide fragments. Partially redundant with PLD4, can cleave all four nucleotides displaying higher efficiency for ssDNA and RNA fragments initiated with uridine and guanosine residues and lower efficiency for cytidine-initiated substrates. As a result, it does not always degrade polynucleotides to the single nucleotide level, it can stall at specific sites sparing certain fragments from exonucleolytic degradation. Processes self and pathogenic ssDNA and RNA molecules that reach the endolysosomal compartment via phagocytosis or autophagy and may serve as 'danger' signals for recognition by innate immune receptors such as toll-like receptors (TLRs). Degrades mitochondrial CpG-rich ssDNA fragments to prevent TLR9 activation and autoinflammatory response, but it can cleave viral RNA to generate ligands for TLR7 activation and initiate antiviral immune responses. In plasmacytoid dendritic cells, it cooperates with endonuclease RNASET2 to release 2',3'-cyclic guanosine monophosphate (2',3'-cGMP), a potent stimulatory ligand for TLR7. Produces 2',3'-cGMPs and cytidine-rich RNA fragments that occupy TLR7 ligand-binding pockets and trigger a signaling-competent state. Can exert polynucleotide phosphatase activity toward 5'-phosphorylated ssDNA substrates although at a slow rate. Transphosphatidylase that catalyzes the exchange with R to S stereo-inversion of the glycerol moiety between (S,R)-lysophosphatidylglycerol (LPG) and monoacylglycerol (MAG) substrates to yield (S,S)-bis(monoacylglycero)phosphate (BMP). Can synthesize a variety of (S,S)-BMPs representing the main phospholipid constituent of lysosomal intralumenal vesicle (ILV) membranes that bind acid hydrolases for lipid degradation. Regulates the homeostasis and interorganellar communication of the endolysosomal system with an overall impact on cellular removal of dysfunctional organelles via autophagy as well as proper protein and lipid turnover. May play a role in myotube formation in response to ER stress. This chain is 5'-3' exonuclease PLD3, found in Homo sapiens (Human).